The chain runs to 543 residues: Zinc finger protein 34 (543 aa).

A KRAB domain is found at 14 to 87 (VTFEDVAVFL…DMHGAEQPSV (74 aa)). The tract at residues 84–151 (QPSVDGSAHG…PGEQRGPRLV (68 aa)) is disordered. The span at 124–147 (EPGEVHERVREPEGRLDRPGEQRG) shows a compositional bias: basic and acidic residues. C2H2-type zinc fingers lie at residues 179–201 (HKCD…KRVH), 234–256 (YYCG…QRLH), 262–284 (YKCE…RRMH), 290–312 (YRCD…QRIH), 318–340 (YKCS…QRIH), 346–368 (YKCS…RRTH), 374–396 (YECK…QRIH), 402–424 (YKCN…QRSH), 430–452 (YECN…QRIH), 458–480 (YKCS…QRSH), 486–508 (YKCA…RRIH), and 514–536 (YTCG…QRIH).

The protein belongs to the krueppel C2H2-type zinc-finger protein family.

Its subcellular location is the nucleus. Its function is as follows. May be involved in transcriptional regulation. The protein is Zinc finger protein 34 (ZNF34) of Bos taurus (Bovine).